The primary structure comprises 318 residues: Acetaldehyde dehydrogenase 1 (318 aa).

Residue 15–18 (SGNI) coordinates NAD(+). The active-site Acyl-thioester intermediate is Cys-133. NAD(+) is bound by residues 164-172 (SAGPGTRAN) and Asn-289.

It belongs to the acetaldehyde dehydrogenase family.

It carries out the reaction acetaldehyde + NAD(+) + CoA = acetyl-CoA + NADH + H(+). This chain is Acetaldehyde dehydrogenase 1 (xylQ), found in Azotobacter vinelandii (strain DJ / ATCC BAA-1303).